Reading from the N-terminus, the 177-residue chain is Large ribosomal subunit protein uL6 (177 aa).

Residues 152 to 171 are compositionally biased toward basic and acidic residues; it reads RPPEPYKGKGVRYDDEEVRR. Positions 152-177 are disordered; sequence RPPEPYKGKGVRYDDEEVRRKEAKKK.

The protein belongs to the universal ribosomal protein uL6 family. In terms of assembly, part of the 50S ribosomal subunit.

In terms of biological role, this protein binds to the 23S rRNA, and is important in its secondary structure. It is located near the subunit interface in the base of the L7/L12 stalk, and near the tRNA binding site of the peptidyltransferase center. In Shewanella putrefaciens (strain CN-32 / ATCC BAA-453), this protein is Large ribosomal subunit protein uL6.